The following is an 85-amino-acid chain: YcgL domain-containing protein PC1_1941 (85 aa).

The region spanning 1-85 (MFCVIYRSAK…PVENLLNTPV (85 aa)) is the YcgL domain.

This chain is YcgL domain-containing protein PC1_1941, found in Pectobacterium carotovorum subsp. carotovorum (strain PC1).